Consider the following 429-residue polypeptide: UDP-N-acetylglucosamine 1-carboxyvinyltransferase (429 aa).

22 to 23 (KN) provides a ligand contact to phosphoenolpyruvate. Arg-102 is a UDP-N-acetyl-alpha-D-glucosamine binding site. Catalysis depends on Cys-126, which acts as the Proton donor. Cys-126 bears the 2-(S-cysteinyl)pyruvic acid O-phosphothioketal mark. UDP-N-acetyl-alpha-D-glucosamine-binding positions include 131 to 135 (RPVDL), Asp-316, and Ile-338.

The protein belongs to the EPSP synthase family. MurA subfamily.

It localises to the cytoplasm. It carries out the reaction phosphoenolpyruvate + UDP-N-acetyl-alpha-D-glucosamine = UDP-N-acetyl-3-O-(1-carboxyvinyl)-alpha-D-glucosamine + phosphate. Its pathway is cell wall biogenesis; peptidoglycan biosynthesis. Its function is as follows. Cell wall formation. Adds enolpyruvyl to UDP-N-acetylglucosamine. This Methylorubrum populi (strain ATCC BAA-705 / NCIMB 13946 / BJ001) (Methylobacterium populi) protein is UDP-N-acetylglucosamine 1-carboxyvinyltransferase.